Here is a 398-residue protein sequence, read N- to C-terminus: Cysteine desulfurase 2 (398 aa).

Pyridoxal 5'-phosphate contacts are provided by residues 71–72 (GT), N150, Q178, and 198–200 (SGH). Residue K201 is modified to N6-(pyridoxal phosphate)lysine. T236 provides a ligand contact to pyridoxal 5'-phosphate. Residue C323 is the Cysteine persulfide intermediate of the active site. [2Fe-2S] cluster is bound at residue C323.

This sequence belongs to the class-V pyridoxal-phosphate-dependent aminotransferase family. NifS/IscS subfamily. In terms of assembly, homodimer. Pyridoxal 5'-phosphate serves as cofactor.

It catalyses the reaction (sulfur carrier)-H + L-cysteine = (sulfur carrier)-SH + L-alanine. Its function is as follows. Catalyzes the removal of elemental sulfur atoms from cysteine to produce alanine. Seems to participate in the biosynthesis of the nitrogenase metalloclusters by providing the inorganic sulfur required for the Fe-S core formation. The protein is Cysteine desulfurase 2 of Trichormus variabilis (strain ATCC 29413 / PCC 7937) (Anabaena variabilis).